The following is a 431-amino-acid chain: Anaerobic glycerol-3-phosphate dehydrogenase subunit B (431 aa).

The protein belongs to the anaerobic G-3-P dehydrogenase subunit B family. Composed of a catalytic GlpA/B dimer and of membrane bound GlpC. FMN is required as a cofactor.

The catalysed reaction is a quinone + sn-glycerol 3-phosphate = dihydroxyacetone phosphate + a quinol. It participates in polyol metabolism; glycerol degradation via glycerol kinase pathway; glycerone phosphate from sn-glycerol 3-phosphate (anaerobic route): step 1/1. Functionally, conversion of glycerol 3-phosphate to dihydroxyacetone. Uses fumarate or nitrate as electron acceptor. This Mannheimia succiniciproducens (strain KCTC 0769BP / MBEL55E) protein is Anaerobic glycerol-3-phosphate dehydrogenase subunit B.